A 143-amino-acid polypeptide reads, in one-letter code: Large ribosomal subunit protein uL13 (143 aa).

The protein belongs to the universal ribosomal protein uL13 family. As to quaternary structure, part of the 50S ribosomal subunit.

This protein is one of the early assembly proteins of the 50S ribosomal subunit, although it is not seen to bind rRNA by itself. It is important during the early stages of 50S assembly. The sequence is that of Large ribosomal subunit protein uL13 from Desulfitobacterium hafniense (strain Y51).